Reading from the N-terminus, the 430-residue chain is Histidine--tRNA ligase (430 aa).

Belongs to the class-II aminoacyl-tRNA synthetase family. Homodimer.

It is found in the cytoplasm. It carries out the reaction tRNA(His) + L-histidine + ATP = L-histidyl-tRNA(His) + AMP + diphosphate + H(+). The chain is Histidine--tRNA ligase from Lactococcus lactis subsp. cremoris (strain MG1363).